We begin with the raw amino-acid sequence, 193 residues long: ATP synthase subunit b 1 (193 aa).

The tract at residues 13-32 is disordered; that stretch reads PAVTGGDTHSGTGVPAEAHG. The chain crosses the membrane as a helical span at residues 40-60; that stretch reads ATFPSQLLWLAITFGLFYLFL.

It belongs to the ATPase B chain family. As to quaternary structure, F-type ATPases have 2 components, F(1) - the catalytic core - and F(0) - the membrane proton channel. F(1) has five subunits: alpha(3), beta(3), gamma(1), delta(1), epsilon(1). F(0) has three main subunits: a(1), b(2) and c(10-14). The alpha and beta chains form an alternating ring which encloses part of the gamma chain. F(1) is attached to F(0) by a central stalk formed by the gamma and epsilon chains, while a peripheral stalk is formed by the delta and b chains.

It localises to the cell inner membrane. F(1)F(0) ATP synthase produces ATP from ADP in the presence of a proton or sodium gradient. F-type ATPases consist of two structural domains, F(1) containing the extramembraneous catalytic core and F(0) containing the membrane proton channel, linked together by a central stalk and a peripheral stalk. During catalysis, ATP synthesis in the catalytic domain of F(1) is coupled via a rotary mechanism of the central stalk subunits to proton translocation. Functionally, component of the F(0) channel, it forms part of the peripheral stalk, linking F(1) to F(0). This chain is ATP synthase subunit b 1, found in Mesorhizobium japonicum (strain LMG 29417 / CECT 9101 / MAFF 303099) (Mesorhizobium loti (strain MAFF 303099)).